The sequence spans 304 residues: Quinolinate synthase (304 aa).

Positions 24 and 41 each coordinate iminosuccinate. Cysteine 86 provides a ligand contact to [4Fe-4S] cluster. Iminosuccinate contacts are provided by residues 112–114 and serine 129; that span reads YVN. Residue cysteine 171 coordinates [4Fe-4S] cluster. Iminosuccinate-binding positions include 197 to 199 and threonine 214; that span reads HPE. Cysteine 259 contributes to the [4Fe-4S] cluster binding site.

It belongs to the quinolinate synthase family. Type 2 subfamily. [4Fe-4S] cluster is required as a cofactor.

The protein localises to the cytoplasm. It catalyses the reaction iminosuccinate + dihydroxyacetone phosphate = quinolinate + phosphate + 2 H2O + H(+). Its pathway is cofactor biosynthesis; NAD(+) biosynthesis; quinolinate from iminoaspartate: step 1/1. In terms of biological role, catalyzes the condensation of iminoaspartate with dihydroxyacetone phosphate to form quinolinate. In Geobacter metallireducens (strain ATCC 53774 / DSM 7210 / GS-15), this protein is Quinolinate synthase.